Consider the following 762-residue polypeptide: MSTFVNDTVEDAIKTPELDQPFEALGLKDDEYARIKEILGRRPTDAELTVYSVMWSEHCSYKSSKVHLRYFGETTTEEMASKILAGIGENAGVVDIGDGNAVTFRVESHNHPSFVEPHQGAATGIGGIVRDIMAMGARPIAVMDQLRFGALDNPDTQRVLPGVVDGISHYGNCLGLPNIGGETVFDDSYAGNPLVNALCVGTLKVEDLKLAFASGTGNKVILFGSRTGLDGIGGVSVLGSASFEEGEERKLPAVQVGDPFAEKVLIECCLELYKAGVVVGIQDLGGGGLACATSELAAAGDGGMRVNLDNVPLRAENMSAAEILASESQERMCAVVTPENVERFLEICAKWDVTCAEIGEVTDEKDRYVVVHNGEVVIDAPPSTIDEGPVYNRPVARPENQDELQLEGEIARPVDVEDIKAAWLKLVASPALASRAFITEQYDRYVRGNTVQAKNANAGVLRIDEETNRGVAISADASGRYTKLEPNTGAQLALAEAYRNVVSTGARPVAVTNCLNFGSPENAGVMWQFKEAVHGLADGSKLLGIPVSGGNVSFYNQTGDEPILPTPVVGVLGVLDNVEQSIGNVLPSEDNDLYLLGETFDEFGGSIWQQVSGAGLNGLPPVVDLLNEQRLADLFVGSDLFAASHDLSEGGLGQTLAELAIHADKGMDVDLSQIHPSLFTSLFAESASRIVVATNRGEELEKRAAELGVPVFKLGRTNDSAVIAVKGADVEFNISVEELREAWTNTLPEAFGHAVGANAVVG.

The active site involves His58. 2 residues coordinate ATP: Tyr61 and Arg105. Position 107 (Glu107) interacts with Mg(2+). Substrate contacts are provided by residues 108–111 (SHNH) and Arg130. His109 (proton acceptor) is an active-site residue. A Mg(2+)-binding site is contributed by Asp131. Gln255 contacts substrate. Asp283 is a binding site for Mg(2+). 327–329 (ESQ) is a substrate binding site. Positions 513 and 550 each coordinate ATP. Asn551 contacts Mg(2+). A substrate-binding site is contributed by Ser553.

Belongs to the FGAMS family. As to quaternary structure, monomer. Part of the FGAM synthase complex composed of 1 PurL, 1 PurQ and 2 PurS subunits.

It is found in the cytoplasm. It carries out the reaction N(2)-formyl-N(1)-(5-phospho-beta-D-ribosyl)glycinamide + L-glutamine + ATP + H2O = 2-formamido-N(1)-(5-O-phospho-beta-D-ribosyl)acetamidine + L-glutamate + ADP + phosphate + H(+). Its pathway is purine metabolism; IMP biosynthesis via de novo pathway; 5-amino-1-(5-phospho-D-ribosyl)imidazole from N(2)-formyl-N(1)-(5-phospho-D-ribosyl)glycinamide: step 1/2. Its function is as follows. Part of the phosphoribosylformylglycinamidine synthase complex involved in the purines biosynthetic pathway. Catalyzes the ATP-dependent conversion of formylglycinamide ribonucleotide (FGAR) and glutamine to yield formylglycinamidine ribonucleotide (FGAM) and glutamate. The FGAM synthase complex is composed of three subunits. PurQ produces an ammonia molecule by converting glutamine to glutamate. PurL transfers the ammonia molecule to FGAR to form FGAM in an ATP-dependent manner. PurS interacts with PurQ and PurL and is thought to assist in the transfer of the ammonia molecule from PurQ to PurL. The chain is Phosphoribosylformylglycinamidine synthase subunit PurL from Corynebacterium glutamicum (strain R).